Here is a 319-residue protein sequence, read N- to C-terminus: Aspartate carbamoyltransferase catalytic subunit (319 aa).

2 residues coordinate carbamoyl phosphate: Arg65 and Thr66. Lys93 serves as a coordination point for L-aspartate. Residues Arg115, His143, and Gln146 each coordinate carbamoyl phosphate. 2 residues coordinate L-aspartate: Arg176 and Arg230. 2 residues coordinate carbamoyl phosphate: Gly271 and Pro272.

This sequence belongs to the aspartate/ornithine carbamoyltransferase superfamily. ATCase family. As to quaternary structure, heterododecamer (2C3:3R2) of six catalytic PyrB chains organized as two trimers (C3), and six regulatory PyrI chains organized as three dimers (R2).

It catalyses the reaction carbamoyl phosphate + L-aspartate = N-carbamoyl-L-aspartate + phosphate + H(+). It participates in pyrimidine metabolism; UMP biosynthesis via de novo pathway; (S)-dihydroorotate from bicarbonate: step 2/3. In terms of biological role, catalyzes the condensation of carbamoyl phosphate and aspartate to form carbamoyl aspartate and inorganic phosphate, the committed step in the de novo pyrimidine nucleotide biosynthesis pathway. This Chelativorans sp. (strain BNC1) protein is Aspartate carbamoyltransferase catalytic subunit.